Here is a 289-residue protein sequence, read N- to C-terminus: Probable endonuclease 4 (289 aa).

Zn(2+) is bound by residues H76, H116, E152, D186, H189, H220, D233, H235, and E265.

It belongs to the AP endonuclease 2 family. It depends on Zn(2+) as a cofactor.

It catalyses the reaction Endonucleolytic cleavage to 5'-phosphooligonucleotide end-products.. Functionally, endonuclease IV plays a role in DNA repair. It cleaves phosphodiester bonds at apurinic or apyrimidinic (AP) sites, generating a 3'-hydroxyl group and a 5'-terminal sugar phosphate. This is Probable endonuclease 4 from Malacoplasma penetrans (strain HF-2) (Mycoplasma penetrans).